A 1075-amino-acid polypeptide reads, in one-letter code: mRNA-binding protein PUF2 (1075 aa).

The disordered stretch occupies residues 38–68; sequence NTNARSVRVSDKRGRSSSTSPQKIGSYRTRA. A Phosphoserine modification is found at S72. Positions 93-105 are enriched in low complexity; that stretch reads TPVVVVPPTSSTP. Positions 93–112 are disordered; sequence TPVVVVPPTSSTPDSLNSTT. S198 carries the phosphoserine modification. The region spanning 316 to 402 is the RRM domain; sequence NTISISNVFP…APSTVSFARV (87 aa). The PUM-HD domain maps to 511-872; that stretch reads ELNHLLQNAL…QLLEEVGLSS (362 aa). Pumilio repeat units lie at residues 574–611, 612–647, 649–683, 684–719, 722–758, and 760–800; these read AIVM…IMLR, KCNK…NLVT, GVSD…FIFE, SVLS…QLLT, SLII…LILC, and KLVN…KIIH. A phosphoserine mark is found at S872 and S876. 2 disordered regions span residues 874–931 and 997–1075; these read GISP…LNFN and NNYN…SYGY. Low complexity-rich tracts occupy residues 901 to 916, 997 to 1009, and 1018 to 1063; these read VSVS…HNSV, NNYN…SQMN, and NNNN…NNNN.

It localises to the cytoplasm. RNA-binding protein involved in post-transcriptional regulation. Negatively regulates expression of COX17 by binding to the 3'-UTR of COX17 mRNA. Promotes decay of COX17 mRNA by enhancing its rate of deadenylation and subsequent turnover. Predominantly binds to mRNAs encoding membrane-associated proteins with roles in transmembrane transport and vesicular trafficking. This Saccharomyces cerevisiae (strain ATCC 204508 / S288c) (Baker's yeast) protein is mRNA-binding protein PUF2 (PUF2).